A 215-amino-acid chain; its full sequence is Large ribosomal subunit protein bL25 (215 aa).

Residues Glu-192–Glu-202 show a composition bias toward acidic residues. The tract at residues Glu-192–Glu-215 is disordered. Residues Glu-204 to Glu-215 are compositionally biased toward basic and acidic residues.

The protein belongs to the bacterial ribosomal protein bL25 family. CTC subfamily. In terms of assembly, part of the 50S ribosomal subunit; part of the 5S rRNA/L5/L18/L25 subcomplex. Contacts the 5S rRNA. Binds to the 5S rRNA independently of L5 and L18.

Functionally, this is one of the proteins that binds to the 5S RNA in the ribosome where it forms part of the central protuberance. The sequence is that of Large ribosomal subunit protein bL25 from Thermotoga neapolitana (strain ATCC 49049 / DSM 4359 / NBRC 107923 / NS-E).